We begin with the raw amino-acid sequence, 235 residues long: Pro-opiomelanocortin (235 aa).

An N-terminal signal peptide occupies residues Met-1–Ser-26. Position 87 is a phenylalanine amide (Phe-87). The disordered stretch occupies residues Gly-88 to Ser-126. Low complexity predominate over residues Arg-90–Gln-100. N-linked (GlcNAc...) asparagine glycosylation is present at Asn-91. A propeptide spanning residues Ala-103–Gly-121 is cleaved from the precursor. Over residues Ser-117–Ser-126 the composition is skewed to basic and acidic residues. Ser-124 bears the N-acetylserine; in Corticotropin mark. Val-136 bears the Valine amide mark. The N-linked (GlcNAc...) asparagine glycan is linked to Asn-152. The residue at position 154 (Ser-154) is a Phosphoserine. Residues Glu-179–Thr-210 are disordered. Positions Asp-185 to Tyr-205 are enriched in basic and acidic residues.

It belongs to the POMC family. In terms of processing, specific enzymatic cleavages at paired basic residues yield the different active peptides. As to expression, ACTH and MSH are produced by the pituitary gland.

It is found in the secreted. Stimulates the adrenal glands to release cortisol. Its function is as follows. Anorexigenic peptide. Increases the pigmentation of skin by increasing melanin production in melanocytes. Functionally, increases the pigmentation of skin by increasing melanin production in melanocytes. In terms of biological role, endogenous orexigenic opiate. Endogenous opiate. The polypeptide is Pro-opiomelanocortin (Pomc) (Mus musculus (Mouse)).